We begin with the raw amino-acid sequence, 255 residues long: Ribonuclease HII (255 aa).

Residues 72-255 form the RNase H type-2 domain; sequence AIICGIDEVG…KSFEPIKSLL (184 aa). Aspartate 78, glutamate 79, and aspartate 170 together coordinate a divalent metal cation.

This sequence belongs to the RNase HII family. Mn(2+) is required as a cofactor. Requires Mg(2+) as cofactor.

Its subcellular location is the cytoplasm. The catalysed reaction is Endonucleolytic cleavage to 5'-phosphomonoester.. Functionally, endonuclease that specifically degrades the RNA of RNA-DNA hybrids. This chain is Ribonuclease HII, found in Staphylococcus aureus (strain USA300).